Here is a 289-residue protein sequence, read N- to C-terminus: Protein charybde (289 aa).

A disordered region spans residues 119–142; it reads TAHHPGHGHGPGPSPMPASPLQST.

The protein belongs to the DDIT4 family.

It localises to the cytoplasm. Its function is as follows. Inhibits cell growth by regulating the Tor pathway upstream of the Tsc1-Tsc2 complex and downstream of Akt1. Acts as a cell death activator during head development. In Drosophila pseudoobscura pseudoobscura (Fruit fly), this protein is Protein charybde (chrb).